The following is a 76-amino-acid chain: MPSVRSVTCCCLLWMMLSVQLVTPGSPGTAQLSGHRTARSPGSTICKMACRTGNGHKYPFCNCRGKRDVVSSSMAV.

A signal peptide spans 1–24; that stretch reads MPSVRSVTCCCLLWMMLSVQLVTP. Residues 25-39 constitute a propeptide that is removed on maturation; that stretch reads GSPGTAQLSGHRTAR. 2 cysteine pairs are disulfide-bonded: C46–C61 and C50–C63. An Arginine amide modification is found at R64. Positions 65–76 are excised as a propeptide; the sequence is GKRDVVSSSMAV.

It belongs to the conotoxin J superfamily. As to expression, expressed by the venom duct.

The protein resides in the secreted. Its function is as follows. Highly inhibits both nicotinic acetylcholine receptors (neuronal (alpha-3/beta-4) and muscular (alpha-1/beta-1/epsilon/delta) subtypes) and the voltage-gated potassium channel Kv1.6/KCNA6 subtype. This chain is Alpha/kappa-conotoxin-like fe14.1, found in Conus ferrugineus (Cone snail).